Here is a 1792-residue protein sequence, read N- to C-terminus: Eukaryotic translation initiation factor 4G (1792 aa).

A compositionally biased stretch (basic and acidic residues) spans 1–12 (MSQRGDRGEGHA). 11 disordered regions span residues 1–285 (MSQR…PRPP), 424–446 (DSSG…TYGS), 491–590 (SPSM…PTPV), 612–659 (NSVP…EDLK), 678–761 (GVNK…NESH), 874–912 (VASE…EITR), 960–993 (SSSI…LDDW), 999–1018 (MSTP…EANG), 1275–1299 (GERE…EERE), 1407–1503 (WQQR…HRTT), and 1537–1600 (ELSS…KLYS). Positions 21-42 (FGGGHRGGGGVGGAGKGGGGSS) are enriched in gly residues. Over residues 88-107 (PLRPPAPQNAPAHVPVPAPR) the composition is skewed to pro residues. 2 stretches are compositionally biased toward polar residues: residues 147–156 (RISSTSTSQG) and 179–191 (STMQ…SSAP). Composition is skewed to low complexity over residues 216-243 (PQAP…PLQQ), 263-278 (PSQV…SVPN), and 432-442 (PSVQQQSQPVS). The span at 491–517 (SPSMNTGPGSNKDNLAGSTTSGHSQVT) shows a compositional bias: polar residues. 3 stretches are compositionally biased toward basic and acidic residues: residues 545–564 (DVNK…KDNE), 571–587 (KSGE…EKHP), and 633–643 (DSNKNATKDTR). A compositionally biased stretch (polar residues) spans 644 to 654 (NLSQEPQSASS). Low complexity predominate over residues 699–718 (AADASSIDRSSARSTSESTE). The segment covering 964 to 990 (ADHELPDESSEKEVNMGEDEGKKKVEL) has biased composition (basic and acidic residues). Residues 1018 to 1030 (GRKRYSRDFLLTL) are EIF4E-binding. The 224-residue stretch at 1183-1406 (QRQLKAILNK…RDSIDLRKNK (224 aa)) folds into the MIF4G domain. The span at 1278-1289 (EEAEADKTEEEG) shows a compositional bias: acidic residues. Basic and acidic residues-rich tracts occupy residues 1290-1299 (EIKQTKEERE) and 1411-1432 (RKVE…ERHA). Composition is skewed to low complexity over residues 1439 to 1450 (RGSVVGSGPRRG) and 1461 to 1470 (SAAALASPSS). 2 stretches are compositionally biased toward basic and acidic residues: residues 1490 to 1503 (IRFE…HRTT) and 1559 to 1572 (AREE…DRSG). The span at 1576 to 1593 (PNTQFAGPSNRPASQEGR) shows a compositional bias: polar residues. The 125-residue stretch at 1603–1727 (DLREKSISAI…SLQEVGTLIE (125 aa)) folds into the MI domain.

The protein belongs to the eukaryotic initiation factor 4G family. As to quaternary structure, EIF4F is a multi-subunit complex, the composition of which varies with external and internal environmental conditions. It is composed of at least EIF4A, EIF4E and EIF4G. In higher plants two isoforms of EIF4F have been identified, named isoform EIF4F and isoform EIF(iso)4F. Isoform EIF4F has subunits p220 and p26, whereas isoform EIF(iso)4F has subunits p82 and p28.

In terms of biological role, component of the protein complex eIF4F, which is involved in the recognition of the mRNA cap, ATP-dependent unwinding of 5'-terminal secondary structure and recruitment of mRNA to the ribosome. The chain is Eukaryotic translation initiation factor 4G from Oryza sativa subsp. japonica (Rice).